Consider the following 232-residue polypeptide: Large ribosomal subunit protein uL1 (232 aa).

The protein belongs to the universal ribosomal protein uL1 family. Part of the 50S ribosomal subunit.

In terms of biological role, binds directly to 23S rRNA. The L1 stalk is quite mobile in the ribosome, and is involved in E site tRNA release. Protein L1 is also a translational repressor protein, it controls the translation of the L11 operon by binding to its mRNA. This is Large ribosomal subunit protein uL1 from Bartonella quintana (strain Toulouse) (Rochalimaea quintana).